The sequence spans 545 residues: Aclacinomycin-N/aclacinomycin-A oxidase (545 aa).

Positions 1–43 (MFVLNEFTRRGFLGTAAAVGGTTVVTTALGGAPAAQAAVPEAA) form a signal peptide, tat-type signal. The FAD-binding PCMH-type domain occupies 76 to 256 (FRGRPDVVYV…TRYWFRTPGA (181 aa)). Residues 113 to 173 (HCFEGFVDDP…WGVTIPAGVC (61 aa)) constitute a cross-link (6-(S-cysteinyl)-8alpha-(pros-histidyl)-FAD (His-Cys)). Residue Y421 is the Proton acceptor of the active site. T451 serves as a coordination point for aclacinomycin Y. N492 contributes to the FAD binding site. Residue Y493 is the Proton acceptor of the active site. Y493 contributes to the aclacinomycin Y binding site.

It belongs to the oxygen-dependent FAD-linked oxidoreductase family. As to quaternary structure, homotetramer; dimer of dimers. Requires FAD as cofactor. Post-translationally, predicted to be exported by the Tat system. The position of the signal peptide cleavage has been experimentally proven. The FAD cofactor is bound via a bicovalent 6-S-cysteinyl, 8alpha-N1-histidyl FAD linkage.

It carries out the reaction aclacinomycin N + O2 = aclacinomycin A + H2O2. It catalyses the reaction aclacinomycin A + O2 = aclacinomycin Y + H2O2. Its activity is regulated as follows. Inhibited by ascorbic acid and iron ion. In terms of biological role, involved in the modification of the terminal sugar residues in the last two steps in the biosynthesis of polyketide antibiotics of the aclacinomycin group. In the first reaction, it catalyzes the oxidation of the hydroxyl group at carbon C4 of the L-rhodinose terminal sugar moiety of aclacinomycin N (AclN) to a keto group, modifying the sugar to cinerulose A and generating aclacinomycin A (AclA). In the second reaction, it catalyzes the elimination of two hydrogen atoms from cinerulose A, leading to a double bond between carbon atoms C2 and C3 and the generation of the L-aculose terminal sugar moiety of aclacinomycin Y (AclY). It can also use aclacinomycin analogs, epsilon-pyrromycinone glycosides, rhodirubins (A, B, C and E) and all triglycosides containing L-cinerulose, L-rhodinose or 2-deoxy-L-fucose as terminal sugar. In Streptomyces galilaeus, this protein is Aclacinomycin-N/aclacinomycin-A oxidase.